The sequence spans 703 residues: Fatty acid oxidation complex subunit alpha (703 aa).

Positions 1-190 are enoyl-CoA hydratase; sequence MSEQKAFSLN…KLGVVDACVP (190 aa). The 3-hydroxyacyl-CoA dehydrogenase stretch occupies residues 308–703; the sequence is AAVKKVGVLG…TRAGEGRTFY (396 aa).

It in the N-terminal section; belongs to the enoyl-CoA hydratase/isomerase family. This sequence in the central section; belongs to the 3-hydroxyacyl-CoA dehydrogenase family. Heterotetramer of two alpha chains (FadJ) and two beta chains (FadI).

The protein localises to the cytoplasm. It carries out the reaction a (3S)-3-hydroxyacyl-CoA = a (2E)-enoyl-CoA + H2O. The catalysed reaction is a 4-saturated-(3S)-3-hydroxyacyl-CoA = a (3E)-enoyl-CoA + H2O. The enzyme catalyses a (3S)-3-hydroxyacyl-CoA + NAD(+) = a 3-oxoacyl-CoA + NADH + H(+). It catalyses the reaction (3S)-3-hydroxybutanoyl-CoA = (3R)-3-hydroxybutanoyl-CoA. Its pathway is lipid metabolism; fatty acid beta-oxidation. Its function is as follows. Catalyzes the formation of a hydroxyacyl-CoA by addition of water on enoyl-CoA. Also exhibits 3-hydroxyacyl-CoA epimerase and 3-hydroxyacyl-CoA dehydrogenase activities. The sequence is that of Fatty acid oxidation complex subunit alpha from Vibrio parahaemolyticus serotype O3:K6 (strain RIMD 2210633).